A 465-amino-acid polypeptide reads, in one-letter code: GTPase Der (465 aa).

EngA-type G domains follow at residues 3–167 (PLVA…PEEG) and 179–352 (IRIA…ESAN). GTP-binding positions include 9 to 16 (GRPNVGKS), 57 to 61 (DTGGI), 119 to 122 (NKID), 185 to 192 (GRPNVGKS), 232 to 236 (DTAGL), and 297 to 300 (NKWD). The KH-like domain maps to 353 to 437 (KTFTTSEVNK…PVSFIFREGT (85 aa)).

It belongs to the TRAFAC class TrmE-Era-EngA-EngB-Septin-like GTPase superfamily. EngA (Der) GTPase family. As to quaternary structure, associates with the 50S ribosomal subunit.

In terms of biological role, GTPase that plays an essential role in the late steps of ribosome biogenesis. In Stenotrophomonas maltophilia (strain K279a), this protein is GTPase Der.